The chain runs to 434 residues: Eukaryotic translation initiation factor 3 subunit E (434 aa).

The PCI domain maps to 219 to 392; the sequence is FFNHPKGRDL…GHVVMGTQPL (174 aa).

It belongs to the eIF-3 subunit E family. As to quaternary structure, component of the eukaryotic translation initiation factor 3 (eIF-3) complex. The eIF-3 complex interacts with pix. Interacts with mxt.

It localises to the cytoplasm. Functionally, component of the eukaryotic translation initiation factor 3 (eIF-3) complex, which is involved in protein synthesis of a specialized repertoire of mRNAs and, together with other initiation factors, stimulates binding of mRNA and methionyl-tRNAi to the 40S ribosome. The eIF-3 complex specifically targets and initiates translation of a subset of mRNAs involved in cell proliferation. The polypeptide is Eukaryotic translation initiation factor 3 subunit E (eIF3-S6) (Drosophila grimshawi (Hawaiian fruit fly)).